The following is a 39-amino-acid chain: Cytochrome b559 subunit beta (39 aa).

A helical membrane pass occupies residues 14–30; it reads WLAVHGLAVPTVSFLGS. Position 18 (histidine 18) interacts with heme.

This sequence belongs to the PsbE/PsbF family. Heterodimer of an alpha subunit and a beta subunit. PSII is composed of 1 copy each of membrane proteins PsbA, PsbB, PsbC, PsbD, PsbE, PsbF, PsbH, PsbI, PsbJ, PsbK, PsbL, PsbM, PsbT, PsbX, PsbY, PsbZ, Psb30/Ycf12, at least 3 peripheral proteins of the oxygen-evolving complex and a large number of cofactors. It forms dimeric complexes. It depends on heme b as a cofactor.

Its subcellular location is the plastid. It is found in the chloroplast thylakoid membrane. In terms of biological role, this b-type cytochrome is tightly associated with the reaction center of photosystem II (PSII). PSII is a light-driven water:plastoquinone oxidoreductase that uses light energy to abstract electrons from H(2)O, generating O(2) and a proton gradient subsequently used for ATP formation. It consists of a core antenna complex that captures photons, and an electron transfer chain that converts photonic excitation into a charge separation. This Muilla maritima (Sea muilla) protein is Cytochrome b559 subunit beta.